The primary structure comprises 708 residues: Leukotoxin translocation ATP-binding protein LktB (708 aa).

The Peptidase C39 domain occupies 1–126; the sequence is MEANHQRNDL…ACYQGQLILV (126 aa). One can recognise an ABC transmembrane type-1 domain in the interval 155–437; that stretch reads FLETLIVSIF…LAQLWQDFQQ (283 aa). Helical transmembrane passes span 159-179, 192-212, 270-290, 296-316, and 389-409; these read LIVS…FQVV, LNII…LSGL, ALTS…MWYY, LVIL…SPIL, and VMVI…LSIG. Residues 469-704 enclose the ABC transporter domain; that stretch reads ISFKNIRFRY…SNGLYSYLHQ (236 aa). Residue 503 to 510 participates in ATP binding; the sequence is GRSGSGKS.

The protein belongs to the ABC transporter superfamily. Protein-1 exporter (TC 3.A.1.109) family. Homodimer.

It is found in the cell inner membrane. It carries out the reaction ATP + H2O + proteinSide 1 = ADP + phosphate + proteinSide 2.. In terms of biological role, part of the ABC transporter complex LktBD involved in leukotoxin export. Transmembrane domains (TMD) form a pore in the inner membrane and the ATP-binding domain (NBD) is responsible for energy generation. The protein is Leukotoxin translocation ATP-binding protein LktB (lktB) of Mannheimia haemolytica (Pasteurella haemolytica).